A 530-amino-acid polypeptide reads, in one-letter code: ATP-dependent 6-phosphofructokinase 4, chloroplastic (530 aa).

The transit peptide at 1–54 (MEASISFLGSTKPNISLFNPSSNVLPRRDFPLPALKLKKVSVLPRILHQKRLIR) directs the protein to the chloroplast. Phosphoserine is present on Ser-121. Residues Gly-152, 215–216 (RG), and 240–243 (GGGT) contribute to the ATP site. Residues 269–271 (TID), 314–316 (MGR), Glu-370, and 427–430 (YMIR) contribute to the substrate site. The active-site Proton acceptor is Asp-271.

This sequence belongs to the phosphofructokinase type A (PFKA) family. PPi-dependent PFK group II subfamily. Atypical ATP-dependent clade 'X' sub-subfamily. As to quaternary structure, homotetramer. Mg(2+) serves as cofactor. As to expression, expressed in leaves, stems and flowers.

The protein resides in the plastid. The protein localises to the chloroplast. The catalysed reaction is beta-D-fructose 6-phosphate + ATP = beta-D-fructose 1,6-bisphosphate + ADP + H(+). It functions in the pathway carbohydrate degradation; glycolysis; D-glyceraldehyde 3-phosphate and glycerone phosphate from D-glucose: step 3/4. Allosterically activated by AMP. Functionally, catalyzes the phosphorylation of D-fructose 6-phosphate to fructose 1,6-bisphosphate by ATP, the first committing step of glycolysis. The sequence is that of ATP-dependent 6-phosphofructokinase 4, chloroplastic from Arabidopsis thaliana (Mouse-ear cress).